The chain runs to 147 residues: D-aminoacyl-tRNA deacylase (147 aa).

The Gly-cisPro motif, important for rejection of L-amino acids motif lies at 137–138; sequence GP.

The protein belongs to the DTD family. Homodimer.

It is found in the cytoplasm. The catalysed reaction is glycyl-tRNA(Ala) + H2O = tRNA(Ala) + glycine + H(+). It catalyses the reaction a D-aminoacyl-tRNA + H2O = a tRNA + a D-alpha-amino acid + H(+). Its function is as follows. An aminoacyl-tRNA editing enzyme that deacylates mischarged D-aminoacyl-tRNAs. Also deacylates mischarged glycyl-tRNA(Ala), protecting cells against glycine mischarging by AlaRS. Acts via tRNA-based rather than protein-based catalysis; rejects L-amino acids rather than detecting D-amino acids in the active site. By recycling D-aminoacyl-tRNA to D-amino acids and free tRNA molecules, this enzyme counteracts the toxicity associated with the formation of D-aminoacyl-tRNA entities in vivo and helps enforce protein L-homochirality. This Acinetobacter baumannii (strain AYE) protein is D-aminoacyl-tRNA deacylase.